The primary structure comprises 406 residues: Tyrosine--tRNA ligase (406 aa).

Tyr-35 serves as a coordination point for L-tyrosine. Residues 40-49 (PTADSLHVGH) carry the 'HIGH' region motif. 2 residues coordinate L-tyrosine: Tyr-168 and Gln-172. Positions 228 to 232 (KMGKT) match the 'KMSKS' region motif. Lys-231 provides a ligand contact to ATP. An S4 RNA-binding domain is found at 340–404 (AELLDILVEA…RGKKNYNKIV (65 aa)).

It belongs to the class-I aminoacyl-tRNA synthetase family. TyrS type 1 subfamily. Homodimer.

It is found in the cytoplasm. The catalysed reaction is tRNA(Tyr) + L-tyrosine + ATP = L-tyrosyl-tRNA(Tyr) + AMP + diphosphate + H(+). Functionally, catalyzes the attachment of tyrosine to tRNA(Tyr) in a two-step reaction: tyrosine is first activated by ATP to form Tyr-AMP and then transferred to the acceptor end of tRNA(Tyr). The sequence is that of Tyrosine--tRNA ligase from Clostridium perfringens (strain 13 / Type A).